The sequence spans 61 residues: MDPKLLDILACPLTKGPLVLSEDKTELISKQAGLAYPIRDGIPVMLESEARSLNVDERLDK.

The protein belongs to the UPF0434 family.

The chain is UPF0434 protein PA14_25520 from Pseudomonas aeruginosa (strain UCBPP-PA14).